Consider the following 248-residue polypeptide: ATP synthase subunit a, chloroplastic (248 aa).

5 consecutive transmembrane segments (helical) span residues 35–55 (GQVF…AIAG), 94–114 (IPYI…GALI), 133–153 (INTT…AGLS), 202–222 (VFTL…GLFA), and 224–244 (SIQA…ALEG).

The protein belongs to the ATPase A chain family. In terms of assembly, F-type ATPases have 2 components, CF(1) - the catalytic core - and CF(0) - the membrane proton channel. CF(1) has five subunits: alpha(3), beta(3), gamma(1), delta(1), epsilon(1). CF(0) has four main subunits: a, b, b' and c.

The protein localises to the plastid. The protein resides in the chloroplast thylakoid membrane. Key component of the proton channel; it plays a direct role in the translocation of protons across the membrane. This Antithamnion sp. (Red alga) protein is ATP synthase subunit a, chloroplastic.